We begin with the raw amino-acid sequence, 116 residues long: U16-barytoxin-Tl1a (116 aa).

Residues 1-20 (MKTIIVFLSLLVLATKFGDA) form the signal peptide. Residues 21–74 (KEGVNQKQKKEVTQNEFREEYLNEMAAMSLVQQLEAIERALFENEAGRNSRQKR) constitute a propeptide that is removed on maturation. 3 disulfide bridges follow: C75–C90, C82–C95, and C89–C110.

It belongs to the neurotoxin 14 (magi-1) family. 06 (ICK-Trit) subfamily. Expressed by the venom gland.

The protein localises to the secreted. Its function is as follows. Ion channel inhibitor. This is U16-barytoxin-Tl1a from Trittame loki (Brush-footed trapdoor spider).